Reading from the N-terminus, the 188-residue chain is Elongation factor P (188 aa).

The protein belongs to the elongation factor P family.

It is found in the cytoplasm. It functions in the pathway protein biosynthesis; polypeptide chain elongation. Involved in peptide bond synthesis. Stimulates efficient translation and peptide-bond synthesis on native or reconstituted 70S ribosomes in vitro. Probably functions indirectly by altering the affinity of the ribosome for aminoacyl-tRNA, thus increasing their reactivity as acceptors for peptidyl transferase. This Rickettsia canadensis (strain McKiel) protein is Elongation factor P.